Consider the following 279-residue polypeptide: uncharacterized protein (279 aa).

This sequence belongs to the PhzF family.

This is an uncharacterized protein from Vibrio cholerae serotype O1 (strain ATCC 39315 / El Tor Inaba N16961).